We begin with the raw amino-acid sequence, 206 residues long: Photosynthetic reaction center cytochrome c-551 (206 aa).

The next 3 membrane-spanning stretches (helical) occupy residues 10–30 (IALAIGGAVLMGTLFFLVSFL), 49–69 (FMGWFLLIFCASLIIMGLGKM), and 76–96 (KWFLSFPLSIFVIVMVMFFSL). Residues Cys152, Cys155, His156, and Met182 each contribute to the heme site.

In terms of assembly, component of the photosynthetic reaction center. The reaction center interacts with the Fenna-Matthews-Olson (FMO, fmoA) complex. Binds 1 heme group per subunit.

It localises to the cell inner membrane. Its function is as follows. Monoheme cytochrome which is the immediate electron donor to P840 of the photosynthetic reaction center complex. This Chlorobaculum parvum (strain DSM 263 / NCIMB 8327) (Chlorobium vibrioforme subsp. thiosulfatophilum) protein is Photosynthetic reaction center cytochrome c-551 (pscC).